Here is a 342-residue protein sequence, read N- to C-terminus: Platelet-activating factor receptor (342 aa).

Residues 1–16 (MEPNNSFRVDSEFRYT) are Extracellular-facing. N-linked (GlcNAc...) asparagine glycosylation is present at Asn-4. A helical transmembrane segment spans residues 17-38 (LFPIFYSIVFVLGVIANSYVLW). The Cytoplasmic segment spans residues 39-54 (VFARLYPSKKFNEIKI). A helical membrane pass occupies residues 55-74 (FMVNLTMADLLFLVTLPLWI). Residues 75–91 (VYYYNQGDWILPKFLCN) are Extracellular-facing. Cys-90 and Cys-173 are oxidised to a cystine. A helical transmembrane segment spans residues 92–113 (LAGCFFFINTYCSVAFLAVITY). Residues 114–133 (NRFQAVTRPIKTAQATTRKR) are Cytoplasmic-facing. Residues 134-155 (GFLLSLIIWVSIVGAASYFFVL) form a helical membrane-spanning segment. Over 156-184 (DSTNSEPKKTGSGNITRCFEHYEKGSIPV) the chain is Extracellular. N-linked (GlcNAc...) asparagine glycosylation is present at Asn-169. Residues 185 to 205 (LIIHIFLVFSFFLVFLIILFC) traverse the membrane as a helical segment. Over 206 to 233 (NLVIIRTLLTQQVQMQRNAEVKRRALWM) the chain is Cytoplasmic. Residues 234–254 (VCTVLAVFVICFVPHHLVQLP) form a helical membrane-spanning segment. Topologically, residues 255–276 (WTLAELGFQDTDFHQGINDAHQ) are extracellular. Residues 277 to 296 (VTLCLLSTNCVLDPIIYCFL) traverse the membrane as a helical segment. The Cytoplasmic portion of the chain corresponds to 297–342 (TKKFRKHLTEKLYSMRESRKCSRATSETGTEVVVQLKDAPIKSLKY).

This sequence belongs to the G-protein coupled receptor 1 family. As to quaternary structure, interacts with ARRB1.

Its subcellular location is the cell membrane. Its function is as follows. Receptor for platelet activating factor, a chemotactic phospholipid mediator that possesses potent inflammatory, smooth-muscle contractile and hypotensive activity. Seems to mediate its action via a G protein that activates a phosphatidylinositol-calcium second messenger system. The protein is Platelet-activating factor receptor of Capra hircus (Goat).